Reading from the N-terminus, the 157-residue chain is Ribosomal RNA large subunit methyltransferase H (157 aa).

S-adenosyl-L-methionine contacts are provided by residues Leu-73, Gly-105, and 124–129 (LSLMTF).

The protein belongs to the RNA methyltransferase RlmH family. Homodimer.

It is found in the cytoplasm. The enzyme catalyses pseudouridine(1915) in 23S rRNA + S-adenosyl-L-methionine = N(3)-methylpseudouridine(1915) in 23S rRNA + S-adenosyl-L-homocysteine + H(+). Functionally, specifically methylates the pseudouridine at position 1915 (m3Psi1915) in 23S rRNA. The chain is Ribosomal RNA large subunit methyltransferase H from Flavobacterium johnsoniae (strain ATCC 17061 / DSM 2064 / JCM 8514 / BCRC 14874 / CCUG 350202 / NBRC 14942 / NCIMB 11054 / UW101) (Cytophaga johnsonae).